Reading from the N-terminus, the 267-residue chain is MSLFTLFLLALVQGITEFLPISSSGHLILLPNLLGIEDQGQAIDVAVHVGTLGAVILYFWRDVKAAIAGTPRLLTGRIDTPGAKLAFLLIIATIPVIIFGLFLEVTGIYDSLRSIAVIGWTMLIFGLVLYWADQRGGTEKQSDDWSLRDAVTMGLWQAVALIPGTSRSGITITAARFLGYDRESAARVAMLMSIPTIIATGVFAGAEVIATADAQTARDGAIAAALSFLAALAALTLMFRLLKSVSFTPYVIYRVILGVILLVIAYA.

Transmembrane regions (helical) follow at residues 1–21 (MSLF…FLPI), 40–60 (GQAI…LYFW), 85–105 (LAFL…FLEV), 112–132 (LRSI…LYWA), 189–209 (AMLM…AEVI), 219–239 (DGAI…TLMF), and 245–265 (VSFT…LVIA).

This sequence belongs to the UppP family.

It localises to the cell inner membrane. It catalyses the reaction di-trans,octa-cis-undecaprenyl diphosphate + H2O = di-trans,octa-cis-undecaprenyl phosphate + phosphate + H(+). Its function is as follows. Catalyzes the dephosphorylation of undecaprenyl diphosphate (UPP). Confers resistance to bacitracin. This Jannaschia sp. (strain CCS1) protein is Undecaprenyl-diphosphatase.